We begin with the raw amino-acid sequence, 706 residues long: Signal transducer and activator of transcription 1 (706 aa).

An SH2 domain is found at 477-574; it reads WCIGFISKND…EEMLRFFESE (98 aa).

Belongs to the transcription factor STAT family. Forms a homodimer or a heterodimer with a related family member. Expressed in adult and larval pharynx, head ganglia, tail ganglia, ventral nerve cord and body muscles.

The protein resides in the cytoplasm. It is found in the nucleus. In terms of biological role, carries out a dual function: signal transduction and activation of transcription. Activated STAT proteins play a role in repression of dauer formation. Neuronal expression is held in check by negative signals through the TGF-beta pathway that target the daf-3 transcription factor. In Caenorhabditis elegans, this protein is Signal transducer and activator of transcription 1.